Consider the following 562-residue polypeptide: Arginine--tRNA ligase 1 (562 aa).

The 'HIGH' region motif lies at 122–132 (PNIAKPFSMGH).

It belongs to the class-I aminoacyl-tRNA synthetase family. As to quaternary structure, monomer.

Its subcellular location is the cytoplasm. The catalysed reaction is tRNA(Arg) + L-arginine + ATP = L-arginyl-tRNA(Arg) + AMP + diphosphate. In Bacillus thuringiensis subsp. konkukian (strain 97-27), this protein is Arginine--tRNA ligase 1.